We begin with the raw amino-acid sequence, 193 residues long: Chaperone protein TorD (193 aa).

It belongs to the TorD/DmsD family. TorD subfamily.

It localises to the cytoplasm. Functionally, involved in the biogenesis of TorA. Acts on TorA before the insertion of the molybdenum cofactor and, as a result, probably favors a conformation of the apoenzyme that is competent for acquiring the cofactor. In Histophilus somni (strain 129Pt) (Haemophilus somnus), this protein is Chaperone protein TorD.